Reading from the N-terminus, the 381-residue chain is Opsin-1 (381 aa).

Residues 1–53 (MASASLISEPSFSAYWGGSGGFANQTVVDKVPPEMLYLVDPHWYQFPPMNPLW) lie on the Extracellular side of the membrane. N-linked (GlcNAc...) asparagine glycosylation occurs at Asn24. Residues 54 to 78 (HGLLGFVIGVLGVISVIGNGMVIYI) form a helical membrane-spanning segment. Over 79 to 90 (FSTTKSLRTPSN) the chain is Cytoplasmic. The chain crosses the membrane as a helical span at residues 91-115 (LLVVNLAFSDFLMMFTMSAPMGINC). Residues 116–130 (YYETWVLGPFMCELY) are Extracellular-facing. Cys127 and Cys204 are joined by a disulfide. A helical membrane pass occupies residues 131–150 (ALFGSLFGCGSIWTMTMIAL). Residues 151–169 (DRYNVIVKGLSAKPMTNKT) are Cytoplasmic-facing. A helical membrane pass occupies residues 170-193 (AMLRILFIWAFSVAWTIMPLFGWN). Topologically, residues 194-217 (RYVPEGNMTACGTDYLTKDWVSRS) are extracellular. Residue Asn200 is glycosylated (N-linked (GlcNAc...) asparagine). A helical membrane pass occupies residues 218 to 245 (YILVYSFFVYLLPLGTIIYSYFFILQAV). The Cytoplasmic portion of the chain corresponds to 246 to 280 (SAHEKQMREQRKKMNVASLRSAEASQTSAECKLAK). Residues 281-304 (VALMTISLWFFGWTPYLIINFTGI) traverse the membrane as a helical segment. The Extracellular portion of the chain corresponds to 305–311 (FETMKIS). Residues 312–336 (PLLTIWGSLFAKANAVFNPIVYGIS) form a helical membrane-spanning segment. Lys323 bears the N6-(retinylidene)lysine mark. Residues 337–381 (HPKYRAALEKKFPSLACASSSDDNTSVASGATTVSDEKSEKSASA) lie on the Cytoplasmic side of the membrane. Residues 354-370 (ASSSDDNTSVASGATTV) are compositionally biased toward polar residues. The interval 354 to 381 (ASSSDDNTSVASGATTVSDEKSEKSASA) is disordered. A compositionally biased stretch (basic and acidic residues) spans 371-381 (SDEKSEKSASA).

It belongs to the G-protein coupled receptor 1 family. Opsin subfamily. In terms of processing, phosphorylated on some or all of the serine and threonine residues present in the C-terminal region.

The protein localises to the cell projection. The protein resides in the rhabdomere membrane. In terms of biological role, visual pigments are the light-absorbing molecules that mediate vision. They consist of an apoprotein, opsin, covalently linked to cis-retinal. The sequence is that of Opsin-1 (Lo1) from Schistocerca gregaria (Desert locust).